The sequence spans 530 residues: UDP-glucuronosyltransferase 1A8 (530 aa).

An N-terminal signal peptide occupies residues 1-25; it reads MARTGWTSPIPLCVSLLLTCGFAEA. Asn-71, Asn-292, and Asn-344 each carry an N-linked (GlcNAc...) asparagine glycan. A helical transmembrane segment spans residues 488 to 504; the sequence is VIGFLLAVVLTVAFITF.

The protein belongs to the UDP-glycosyltransferase family. In terms of assembly, homodimer. Homooligomer. Interacts with UGT1A1, UGT1A3, UGT1A4, UGT1A6, UGT1A7, UGT1A9 and UGT1A10 to form heterodimers. Isoform 1 interacts with isoform 2/i2 suggesting that oligomerization is involved in negative regulation of transferase activity by isoform 2. Isoform 1 also interacts with respective i2 isoforms of UGT1A1, UGT1A3, UGT1A4, UGT1A6, UGT1A7, UGT1A9 and UGT1A10. In terms of tissue distribution, expressed in kidney, colon and small intestine. Not expressed in liver. Expressed in liver, kidney, colon and small intestine.

The protein resides in the endoplasmic reticulum membrane. It catalyses the reaction glucuronate acceptor + UDP-alpha-D-glucuronate = acceptor beta-D-glucuronoside + UDP + H(+). It carries out the reaction 17beta-estradiol + UDP-alpha-D-glucuronate = 17beta-estradiol 3-O-(beta-D-glucuronate) + UDP + H(+). The enzyme catalyses 17alpha-estradiol + UDP-alpha-D-glucuronate = 17alpha-estradiol 3-O-(beta-D-glucuronate) + UDP + H(+). The catalysed reaction is estrone + UDP-alpha-D-glucuronate = estrone 3-O-(beta-D-glucuronate) + UDP + H(+). It catalyses the reaction 16alpha,17alpha-estriol + UDP-alpha-D-glucuronate = 16alpha,17alpha-estriol 3-O-(beta-D-glucuronate) + UDP + H(+). It carries out the reaction 2-hydroxy-17beta-estradiol + UDP-alpha-D-glucuronate = 2-hydroxy-17beta-estradiol 3-O-(beta-D-glucuronate) + UDP + H(+). The enzyme catalyses 2-hydroxy-17beta-estradiol + UDP-alpha-D-glucuronate = 17beta-estradiol 2-O-(beta-D-glucuronate) + UDP + H(+). The catalysed reaction is 2-hydroxyestrone + UDP-alpha-D-glucuronate = 2-hydroxyestrone 3-O-(beta-D-glucuronate) + UDP + H(+). It catalyses the reaction 4-hydroxy-17beta-estradiol + UDP-alpha-D-glucuronate = 4-hydroxy-17beta-estradiol 3-O-(beta-D-glucuronate) + UDP + H(+). It carries out the reaction 4-hydroxy-17beta-estradiol + UDP-alpha-D-glucuronate = 17beta-estradiol 4-O-(beta-D-glucuronate) + UDP + H(+). The enzyme catalyses 4-hydroxyestrone + UDP-alpha-D-glucuronate = 4-hydroxyestrone 3-O-(beta-D-glucuronate) + UDP + H(+). The catalysed reaction is 4-hydroxyestrone + UDP-alpha-D-glucuronate = estrone 4-O-(beta-D-glucuronate) + UDP + H(+). It catalyses the reaction 2-methoxy-17beta-estradiol + UDP-alpha-D-glucuronate = 2-methoxy-17beta-estradiol 3-O-(beta-D-glucuronate) + UDP + H(+). It carries out the reaction 2-methoxyestrone + UDP-alpha-D-glucuronate = 2-methoxyestrone 3-O-(beta-D-glucuronate) + UDP + H(+). The enzyme catalyses 4-methoxy-17beta-estradiol + UDP-alpha-D-glucuronate = 4-methoxy-17beta-estradiol 3-O-(beta-D-glucuronate) + UDP + H(+). The catalysed reaction is 4-methoxyestrone + UDP-alpha-D-glucuronate = 4-methoxyestrone 3-O-(beta-D-glucuronate) + UDP + H(+). It catalyses the reaction 17beta-hydroxy-5alpha-androstan-3-one + UDP-alpha-D-glucuronate = 5alpha-dihydrotestosterone 17-O-(beta-D-glucuronate) + UDP + H(+). It carries out the reaction 5alpha-dihydrotestosterone 17-O-(beta-D-glucuronate) + UDP-alpha-D-glucuronate = 5alpha-dihydrotestosterone 17-O-[beta-D-glucuronosyl-(1-&gt;2)-glucuronate] + UDP + H(+). The enzyme catalyses prunetin + UDP-alpha-D-glucuronate = prunetin-4'-O-beta-D-glucuronide + UDP. The catalysed reaction is prunetin + UDP-alpha-D-glucuronate = prunetin-5-O-beta-D-glucuronide + UDP. It catalyses the reaction candesartan + UDP-alpha-D-glucuronate = candesartan O-beta-D-glucuronoside + UDP. It carries out the reaction mycophenolate + UDP-alpha-D-glucuronate = mycophenolate 7-O-beta-D-glucuronide + UDP + H(+). The enzyme catalyses (E)-ferulate + UDP-alpha-D-glucuronate = (E)-4-O-(beta-D-glucuronosyl)-ferulate + UDP + H(+). The catalysed reaction is (E)-ferulate + UDP-alpha-D-glucuronate = (E)-ferulic acid beta-D-glucuronate ester + UDP. In terms of biological role, UDP-glucuronosyltransferase (UGT) that catalyzes phase II biotransformation reactions in which lipophilic substrates are conjugated with glucuronic acid to increase the metabolite's water solubility, thereby facilitating excretion into either the urine or bile. Essential for the elimination and detoxification of drugs, xenobiotics and endogenous compounds. Catalyzes the glucuronidation of endogenous steroid hormones such as androgens and estrogens. Produces dihydrotestosterone (DHT) diglucuronide from the DHT after two subsequent glucoronidation steps. Involved in the glucuronidation of the phytochemical ferulic acid at the phenolic or the carboxylic acid group. Also catalyzes the glucuronidation of the isoflavones genistein, daidzein, glycitein, formononetin, biochanin A and prunetin, which are phytoestrogens with anticancer and cardiovascular properties. Involved in the glucuronidation of the AGTR1 angiotensin receptor antagonist caderastan, a drug which can inhibit the effect of angiotensin II. Also metabolizes mycophenolate, an immunosuppressive agent. Functionally, lacks UGT glucuronidation activity but acts as a negative regulator of isoform 1. This chain is UDP-glucuronosyltransferase 1A8, found in Homo sapiens (Human).